Consider the following 189-residue polypeptide: GTPase HRas (189 aa).

Met1 carries the post-translational modification N-acetylmethionine; in GTPase HRas; alternate. Thr2 is modified (N-acetylthreonine; in GTPase HRas, N-terminally processed). Residues 13-18 (GVGKSA), 29-35 (VDEYDPT), 59-60 (AG), 116-119 (NKCD), and 145-147 (SAK) each bind GTP. Positions 32–40 (YDPTIEDSY) match the Effector region motif. Thr35 is a glycosylation site ((Microbial infection) O-linked (Glc) threonine; by P.sordellii toxin TcsL). Residue Cys118 is modified to S-nitrosocysteine. Residues 166 to 185 (HKLRKLNPPDESGPGCMSCK) form a hypervariable region region. Lys170 participates in a covalent cross-link: Glycyl lysine isopeptide (Lys-Gly) (interchain with G-Cter in ubiquitin). Cys181 carries S-palmitoyl cysteine lipidation. Residue Cys184 is the site of S-(15-deoxy-Delta12,14-prostaglandin J2-9-yl)cysteine; alternate attachment. Cys184 carries the S-palmitoyl cysteine; alternate lipid modification. A Cysteine methyl ester modification is found at Cys186. Residue Cys186 is the site of S-farnesyl cysteine attachment. The propeptide at 187 to 189 (VLS) is removed in mature form.

The protein belongs to the small GTPase superfamily. Ras family. As to quaternary structure, in its GTP-bound form interacts with PLCE1. Interacts with TBC1D10C. Interacts with RGL3. Interacts with HSPD1. Found in a complex with at least BRAF, HRAS, MAP2K1, MAPK3 and RGS14. Interacts (active GTP-bound form) with RGS14 (via RBD 1 domain). Forms a signaling complex with RASGRP1 and DGKZ. Interacts with RASSF5. Interacts with PDE6D. Interacts with IKZF3. Interacts with RACK1. Interacts with PIK3CG; the interaction is required for membrane recruitment and beta-gamma G protein dimer-dependent activation of the PI3K gamma complex PIK3CG:PIK3R6. Interacts with RAPGEF2. Interacts (active GTP-bound form) with both SHOC2 and PP1c (all isoforms) to form a tertiary complex; SHOC2 and PP1c preferably bind M-Ras/MRAS, but they also bind K-Ras/KRAS, N-Ras/NRAS and H-Ras/HRAS. Interacts (GTP-bound form) with MAPKAP1/SIN1; inhibiting H-Ras/HRAS activity. Post-translationally, palmitoylated by the ZDHHC9-GOLGA7 complex. A continuous cycle of de- and re-palmitoylation regulates rapid exchange between plasma membrane and Golgi. In terms of processing, S-nitrosylated; critical for redox regulation. Important for stimulating guanine nucleotide exchange. No structural perturbation on nitrosylation. The covalent modification of cysteine by 15-deoxy-Delta12,14-prostaglandin-J2 is autocatalytic and reversible. It may occur as an alternative to other cysteine modifications, such as S-nitrosylation and S-palmitoylation. Post-translationally, acetylation at Lys-104 prevents interaction with guanine nucleotide exchange factors (GEFs). In terms of processing, fatty-acylated at Lys-170. Ubiquitinated by the BCR(LZTR1) E3 ubiquitin ligase complex at Lys-170 in a non-degradative manner, leading to inhibit Ras signaling by decreasing Ras association with membranes. Post-translationally, (Microbial infection) Glucosylated at Thr-35 by P.sordellii toxin TcsL. Monoglucosylation completely prevents the recognition of the downstream effector, blocking the GTPases in their inactive form, leading to inhibit Ras signaling. As to expression, widely expressed.

The protein localises to the cell membrane. It is found in the golgi apparatus. It localises to the golgi apparatus membrane. Its subcellular location is the nucleus. The protein resides in the cytoplasm. The protein localises to the perinuclear region. The catalysed reaction is GTP + H2O = GDP + phosphate + H(+). With respect to regulation, alternates between an inactive form bound to GDP and an active form bound to GTP. Activated by a guanine nucleotide-exchange factor (GEF) and inactivated by a GTPase-activating protein (GAP). In terms of biological role, involved in the activation of Ras protein signal transduction. Ras proteins bind GDP/GTP and possess intrinsic GTPase activity. In Homo sapiens (Human), this protein is GTPase HRas (HRAS).